We begin with the raw amino-acid sequence, 245 residues long: 1-(5-phosphoribosyl)-5-[(5-phosphoribosylamino)methylideneamino] imidazole-4-carboxamide isomerase (245 aa).

Aspartate 7 (proton acceptor) is an active-site residue. Aspartate 129 serves as the catalytic Proton donor.

It belongs to the HisA/HisF family.

The protein localises to the cytoplasm. The enzyme catalyses 1-(5-phospho-beta-D-ribosyl)-5-[(5-phospho-beta-D-ribosylamino)methylideneamino]imidazole-4-carboxamide = 5-[(5-phospho-1-deoxy-D-ribulos-1-ylimino)methylamino]-1-(5-phospho-beta-D-ribosyl)imidazole-4-carboxamide. The protein operates within amino-acid biosynthesis; L-histidine biosynthesis; L-histidine from 5-phospho-alpha-D-ribose 1-diphosphate: step 4/9. The protein is 1-(5-phosphoribosyl)-5-[(5-phosphoribosylamino)methylideneamino] imidazole-4-carboxamide isomerase of Vibrio vulnificus (strain CMCP6).